The sequence spans 298 residues: Developmental pluripotency-associated protein 2 (298 aa).

Residues 36–61 are disordered; the sequence is NMEQMEPSVSSTSDVKLEKPKKYNPG. Positions 92–126 constitute an SAP domain; that stretch reads INKVCRDTLRDWCQQLGLSTNGKKIEVYLRLHRHA.

Interacts with DPPA4. In terms of tissue distribution, expressed in embryonic stem cells. No expression is seen in 5 months embryo, mesenchymal stem cells, embryonic fibrocytes and adult tissues.

It is found in the nucleus. In terms of biological role, binds to target gene promoters, including NKX2-5 and SYCE1, but not GATA4, and may be involved in the maintenance of the active epigenetic status of these genes. This is Developmental pluripotency-associated protein 2 (DPPA2) from Homo sapiens (Human).